Reading from the N-terminus, the 349-residue chain is Diacylglycerol O-acyltransferase 2B (349 aa).

Helical transmembrane passes span 44–64 and 114–134; these read ICLI…ILIM and YIMS…NFAT.

Belongs to the diacylglycerol acyltransferase family.

It localises to the endoplasmic reticulum membrane. It catalyses the reaction an acyl-CoA + a 1,2-diacyl-sn-glycerol = a triacyl-sn-glycerol + CoA. It participates in glycerolipid metabolism; triacylglycerol biosynthesis. Its function is as follows. Catalyzes the terminal and only committed step in triacylglycerol synthesis by using diacylglycerol and fatty acyl CoA as substrates. Required for storage lipid synthesis. This chain is Diacylglycerol O-acyltransferase 2B (DGAT2B), found in Umbelopsis ramanniana (Oleaginous fungus).